The primary structure comprises 187 residues: Pterin-4-alpha-carbinolamine dehydratase 2, mitochondrial (187 aa).

The N-terminal 33 residues, 1 to 33 (MSRLLLPKLFSISRTQVPAASLFNNLYRRHKRF), are a transit peptide targeting the mitochondrion.

It belongs to the pterin-4-alpha-carbinolamine dehydratase family.

It localises to the mitochondrion. The catalysed reaction is (4aS,6R)-4a-hydroxy-L-erythro-5,6,7,8-tetrahydrobiopterin = (6R)-L-erythro-6,7-dihydrobiopterin + H2O. Functionally, involved in tetrahydrobiopterin biosynthesis. Possesses pterin-4-alpha-carbinolamine dehydratase activity when expressed in a bacterial heterolgous system. This is Pterin-4-alpha-carbinolamine dehydratase 2, mitochondrial from Arabidopsis thaliana (Mouse-ear cress).